Here is a 176-residue protein sequence, read N- to C-terminus: Ribosome maturation factor RimM (176 aa).

One can recognise a PRC barrel domain in the interval 93–170 (DGEYYHADLI…ELPTEIEGDT (78 aa)).

This sequence belongs to the RimM family. In terms of assembly, binds ribosomal protein uS19.

It is found in the cytoplasm. Functionally, an accessory protein needed during the final step in the assembly of 30S ribosomal subunit, possibly for assembly of the head region. Essential for efficient processing of 16S rRNA. May be needed both before and after RbfA during the maturation of 16S rRNA. It has affinity for free ribosomal 30S subunits but not for 70S ribosomes. In Rhodopseudomonas palustris (strain BisB5), this protein is Ribosome maturation factor RimM.